Consider the following 163-residue polypeptide: Cyclic pyranopterin monophosphate synthase (163 aa).

Residues 75–77 (LCH) and 113–114 (ME) each bind substrate. D128 is an active-site residue.

It belongs to the MoaC family. As to quaternary structure, homohexamer; trimer of dimers.

The enzyme catalyses (8S)-3',8-cyclo-7,8-dihydroguanosine 5'-triphosphate = cyclic pyranopterin phosphate + diphosphate. It participates in cofactor biosynthesis; molybdopterin biosynthesis. In terms of biological role, catalyzes the conversion of (8S)-3',8-cyclo-7,8-dihydroguanosine 5'-triphosphate to cyclic pyranopterin monophosphate (cPMP). This is Cyclic pyranopterin monophosphate synthase from Jannaschia sp. (strain CCS1).